The sequence spans 303 residues: N-acetyl-D-glucosamine kinase (303 aa).

Residues 4–11 (GFDIGGTK) and 133–140 (GVGGGLVL) contribute to the ATP site. Positions 157, 177, 179, and 184 each coordinate Zn(2+).

Belongs to the ROK (NagC/XylR) family. NagK subfamily.

The catalysed reaction is N-acetyl-D-glucosamine + ATP = N-acetyl-D-glucosamine 6-phosphate + ADP + H(+). It participates in cell wall biogenesis; peptidoglycan recycling. In terms of biological role, catalyzes the phosphorylation of N-acetyl-D-glucosamine (GlcNAc) derived from cell-wall degradation, yielding GlcNAc-6-P. The chain is N-acetyl-D-glucosamine kinase from Salmonella paratyphi A (strain ATCC 9150 / SARB42).